A 502-amino-acid chain; its full sequence is Probable cytochrome P450 554A1 (502 aa).

A helical membrane pass occupies residues 3–20 (LLLFIFFLILFYYSVKYY). Residue Cys-448 coordinates heme.

The protein belongs to the cytochrome P450 family. Requires heme as cofactor.

The protein localises to the membrane. This chain is Probable cytochrome P450 554A1 (cyp554A1), found in Dictyostelium discoideum (Social amoeba).